A 66-amino-acid chain; its full sequence is Large ribosomal subunit protein bL31 (66 aa).

Cys16, Cys18, Cys36, and Cys39 together coordinate Zn(2+).

This sequence belongs to the bacterial ribosomal protein bL31 family. Type A subfamily. As to quaternary structure, part of the 50S ribosomal subunit. The cofactor is Zn(2+).

In terms of biological role, binds the 23S rRNA. The chain is Large ribosomal subunit protein bL31 from Sulfurimonas denitrificans (strain ATCC 33889 / DSM 1251) (Thiomicrospira denitrificans (strain ATCC 33889 / DSM 1251)).